The following is a 273-amino-acid chain: Zinc finger protein 32 (273 aa).

C2H2-type zinc fingers lie at residues 77 to 99, 105 to 127, and 133 to 155; these read YECQ…ERIH, FECT…QRIH, and YQCK…ERLH. Residues C79, C82, H95, H99, C107, C110, H123, H127, S141, Q144, G157, Y161, F198, K201, L214, A218, C247, C250, H263, and C267 each contribute to the Zn(2+) site. C2H2-type zinc fingers lie at residues 161-183 and 189-211; these read YECA…RRVH and YRCD…IRVH. The C2H2-type 6 zinc finger occupies 217–239; it reads YACTQCRKSFHTRGNCILHGKIH. A CCHC-type zinc finger spans residues 245-267; that stretch reads YLCGQCGKSFTQRGSLAVHQRSC.

The protein belongs to the krueppel C2H2-type zinc-finger protein family.

Its subcellular location is the nucleus. Functionally, may be involved in transcriptional regulation. The chain is Zinc finger protein 32 (ZNF32) from Homo sapiens (Human).